The sequence spans 1411 residues: DNA-directed RNA polymerase subunit beta' (1411 aa).

Residues Cys-70, Cys-72, Cys-85, and Cys-88 each contribute to the Zn(2+) site. Residues Asp-460, Asp-462, and Asp-464 each coordinate Mg(2+). Zn(2+) is bound by residues Cys-814, Cys-889, Cys-896, and Cys-899. A compositionally biased stretch (polar residues) spans 1387–1399 (RSTSSGTEITSPS). The tract at residues 1387-1411 (RSTSSGTEITSPSKDAIPLGSKVGF) is disordered.

Belongs to the RNA polymerase beta' chain family. In terms of assembly, the RNAP catalytic core consists of 2 alpha, 1 beta, 1 beta' and 1 omega subunit. When a sigma factor is associated with the core the holoenzyme is formed, which can initiate transcription. Mg(2+) is required as a cofactor. Zn(2+) serves as cofactor.

It catalyses the reaction RNA(n) + a ribonucleoside 5'-triphosphate = RNA(n+1) + diphosphate. Its function is as follows. DNA-dependent RNA polymerase catalyzes the transcription of DNA into RNA using the four ribonucleoside triphosphates as substrates. The chain is DNA-directed RNA polymerase subunit beta' from Xylella fastidiosa (strain M12).